A 249-amino-acid polypeptide reads, in one-letter code: Salivary antigen-5 (249 aa).

Residues Met1–Ala26 form the signal peptide. The region spanning Ser50–Tyr193 is the SCP domain. Residues Asn57, Asn127, and Asn168 are each glycosylated (N-linked (GlcNAc...) asparagine).

Belongs to the CRISP family. Venom allergen 5-like subfamily. In terms of assembly, monomeric in solution. Cu(2+) is required as a cofactor. As to expression, saliva (at protein level). Salivary gland (at protein level).

It localises to the secreted. In terms of biological role, antioxidant protein that scavenges superoxide radicals. Removes superoxide radicals produced by PMA-stimulated host neutrophils. Inhibits host platelet aggregation induced by low doses of collagen by interfering with the pro-aggregatory properties of reactive oxygen species on platelets. Binds to heparin and sulfated glycosaminoglycans. In Dipetalogaster maximus (Blood-sucking bug), this protein is Salivary antigen-5.